A 91-amino-acid polypeptide reads, in one-letter code: Large ribosomal subunit protein uL23c (91 aa).

The protein belongs to the universal ribosomal protein uL23 family. In terms of assembly, part of the 50S ribosomal subunit.

Its subcellular location is the plastid. It is found in the chloroplast. Binds to 23S rRNA. This is Large ribosomal subunit protein uL23c (rpl23) from Pinus koraiensis (Korean pine).